A 345-amino-acid polypeptide reads, in one-letter code: Phosphoribosylformylglycinamidine cyclo-ligase (345 aa).

The protein belongs to the AIR synthase family.

It is found in the cytoplasm. It catalyses the reaction 2-formamido-N(1)-(5-O-phospho-beta-D-ribosyl)acetamidine + ATP = 5-amino-1-(5-phospho-beta-D-ribosyl)imidazole + ADP + phosphate + H(+). Its pathway is purine metabolism; IMP biosynthesis via de novo pathway; 5-amino-1-(5-phospho-D-ribosyl)imidazole from N(2)-formyl-N(1)-(5-phospho-D-ribosyl)glycinamide: step 2/2. The sequence is that of Phosphoribosylformylglycinamidine cyclo-ligase from Ligilactobacillus salivarius (strain UCC118) (Lactobacillus salivarius).